A 526-amino-acid chain; its full sequence is Microphthalmia-associated transcription factor (526 aa).

The segment at 20–54 is disordered; sequence EPKTYYELKSQPLKSSSSAEHSGASKPPLSSSTMT. The segment covering 34–44 has biased composition (low complexity); it reads SSSSAEHSGAS. Residue Ser180 is modified to Phosphoserine; by MAPK. A Glycyl lysine isopeptide (Lys-Gly) (interchain with G-Cter in SUMO) cross-link involves residue Lys289. The bHLH domain maps to 311–364; that stretch reads QKKDNHNLIERRRRFNINDRIKELGTLIPKSNDPDMRWNKGTILKASVDYIRKL. Residues 355–401 are a coiled coil; the sequence is KASVDYIRKLQREQQRAKDLENRQKKLEHANRHLLLRVQELEMQARA. A leucine-zipper region spans residues 374 to 395; that stretch reads LENRQKKLEHANRHLLLRVQEL. Residue Ser405 is modified to Phosphoserine; by GSK3. Ser414 bears the Phosphoserine mark. Lys423 participates in a covalent cross-link: Glycyl lysine isopeptide (Lys-Gly) (interchain with G-Cter in SUMO). Ser491 is subject to Phosphoserine. A disordered region spans residues 496–526; the sequence is TDPLLSSVSPGASKTSSRRSSMSAEETEHAC. Positions 507–519 are enriched in low complexity; sequence ASKTSSRRSSMSA. The residue at position 516 (Ser516) is a Phosphoserine; by RPS6KA1.

The protein belongs to the MiT/TFE family. As to quaternary structure, homodimer or heterodimer; dimerization is mediated via the coiled coil region. Efficient DNA binding requires dimerization with another bHLH protein. Binds DNA in the form of homodimer or heterodimer with either TFE3, TFEB or TFEC. Identified in a complex with HINT1 and CTNNB1. Interacts with KARS1. Interacts with VSX2. Phosphorylation at Ser-405 significantly enhances the ability to bind the tyrosinase promoter. Phosphorylated at Ser-180 and Ser-516 following KIT signaling, triggering a short live activation: Phosphorylation at Ser-180 and Ser-516 by MAPK and RPS6KA1, respectively, activate the transcription factor activity but also promote ubiquitination and subsequent degradation by the proteasome. Phosphorylated in response to blue light (415nm). In terms of processing, ubiquitinated following phosphorylation at Ser-180, leading to subsequent degradation by the proteasome. Deubiquitinated by USP13, preventing its degradation.

Its subcellular location is the nucleus. It is found in the cytoplasm. Functionally, transcription factor that regulates the expression of genes with essential roles in cell differentiation, proliferation and survival. Binds to M-boxes (5'-TCATGTG-3') and symmetrical DNA sequences (E-boxes) (5'-CACGTG-3') found in the promoters of target genes, such as BCL2 and tyrosinase (TYR). Plays an important role in melanocyte development by regulating the expression of tyrosinase (TYR) and tyrosinase-related protein 1 (TYRP1). Plays a critical role in the differentiation of various cell types, such as neural crest-derived melanocytes, mast cells, osteoclasts and optic cup-derived retinal pigment epithelium. The sequence is that of Microphthalmia-associated transcription factor (Mitf) from Rattus norvegicus (Rat).